We begin with the raw amino-acid sequence, 511 residues long: Bifunctional purine biosynthesis protein PurH (511 aa).

The 145-residue stretch at 1 to 145 (MKKRALVSVS…KNHKFVSVIV (145 aa)) folds into the MGS-like domain.

Belongs to the PurH family.

The enzyme catalyses (6R)-10-formyltetrahydrofolate + 5-amino-1-(5-phospho-beta-D-ribosyl)imidazole-4-carboxamide = 5-formamido-1-(5-phospho-D-ribosyl)imidazole-4-carboxamide + (6S)-5,6,7,8-tetrahydrofolate. The catalysed reaction is IMP + H2O = 5-formamido-1-(5-phospho-D-ribosyl)imidazole-4-carboxamide. It functions in the pathway purine metabolism; IMP biosynthesis via de novo pathway; 5-formamido-1-(5-phospho-D-ribosyl)imidazole-4-carboxamide from 5-amino-1-(5-phospho-D-ribosyl)imidazole-4-carboxamide (10-formyl THF route): step 1/1. Its pathway is purine metabolism; IMP biosynthesis via de novo pathway; IMP from 5-formamido-1-(5-phospho-D-ribosyl)imidazole-4-carboxamide: step 1/1. This chain is Bifunctional purine biosynthesis protein PurH, found in Bacillus cereus (strain B4264).